Consider the following 108-residue polypeptide: Iron-sulfur cluster assembly protein CyaY (108 aa).

Belongs to the frataxin family.

Involved in iron-sulfur (Fe-S) cluster assembly. May act as a regulator of Fe-S biogenesis. The protein is Iron-sulfur cluster assembly protein CyaY of Pseudomonas aeruginosa (strain ATCC 15692 / DSM 22644 / CIP 104116 / JCM 14847 / LMG 12228 / 1C / PRS 101 / PAO1).